A 142-amino-acid polypeptide reads, in one-letter code: Hemoglobin subunit alpha (142 aa).

Ser1 carries the post-translational modification N-acetylserine. One can recognise a Globin domain in the interval 1-142 (SLSDKDKAVV…LALALSEKYR (142 aa)). His59 serves as a coordination point for O2. His88 is a heme b binding site.

This sequence belongs to the globin family. In terms of assembly, heterotetramer of two alpha chains and two beta chains. As to expression, red blood cells.

Involved in oxygen transport from gills to the various peripheral tissues. The sequence is that of Hemoglobin subunit alpha (hba) from Carassius auratus (Goldfish).